The chain runs to 481 residues: Cys-Gly metallodipeptidase DUG1 (481 aa).

Zn(2+) is bound at residue His102. Asp104 is an active-site residue. Asp137 contacts Zn(2+). The Proton acceptor role is filled by Glu171. 3 residues coordinate Zn(2+): Glu172, Asp200, and His450. At Ser451 the chain carries Phosphoserine.

This sequence belongs to the peptidase M20A family. In terms of assembly, homodimer. Component of the GSH degradosomal complex composed of at least DUG1, DUG2 and DUG3. Requires Zn(2+) as cofactor. Mn(2+) is required as a cofactor.

It is found in the cytoplasm. Its subcellular location is the mitochondrion. Its function is as follows. Catalytic component of the GSH degradosomal complex involved in the degradation of glutathione (GSH) and other peptides containing a gamma-glu-X bond. Also functions in a DUG2-DUG3-independent manner as a dipeptidase with high specificity for Cys-Gly and no activity toward tri- or tetrapeptides. The polypeptide is Cys-Gly metallodipeptidase DUG1 (DUG1) (Saccharomyces cerevisiae (strain ATCC 204508 / S288c) (Baker's yeast)).